A 1399-amino-acid chain; its full sequence is DNA-directed RNA polymerase subunit beta' (1399 aa).

Residues Cys-70, Cys-72, Cys-85, and Cys-88 each coordinate Zn(2+). Asp-460, Asp-462, and Asp-464 together coordinate Mg(2+). Zn(2+)-binding residues include Cys-814, Cys-888, Cys-895, and Cys-898.

The protein belongs to the RNA polymerase beta' chain family. In terms of assembly, the RNAP catalytic core consists of 2 alpha, 1 beta, 1 beta' and 1 omega subunit. When a sigma factor is associated with the core the holoenzyme is formed, which can initiate transcription. Requires Mg(2+) as cofactor. It depends on Zn(2+) as a cofactor.

The enzyme catalyses RNA(n) + a ribonucleoside 5'-triphosphate = RNA(n+1) + diphosphate. Functionally, DNA-dependent RNA polymerase catalyzes the transcription of DNA into RNA using the four ribonucleoside triphosphates as substrates. This Pseudomonas fluorescens (strain Pf0-1) protein is DNA-directed RNA polymerase subunit beta'.